Consider the following 341-residue polypeptide: Heterogeneous nuclear ribonucleoproteins A2/B1 (341 aa).

RRM domains are found at residues 9–92 (RKLF…ESGK) and 100–179 (KKLF…LSRQ). Lys-10 participates in a covalent cross-link: Glycyl lysine isopeptide (Lys-Gly) (interchain with G-Cter in SUMO2). Ser-17 is modified (phosphoserine). The residue at position 26 (Arg-26) is an Omega-N-methylarginine. The residue at position 73 (Ser-73) is a Phosphoserine. Lys-92 carries the N6,N6-dimethyllysine; alternate modification. A Glycyl lysine isopeptide (Lys-Gly) (interchain with G-Cter in SUMO2); alternate cross-link involves residue Lys-92. Glycyl lysine isopeptide (Lys-Gly) (interchain with G-Cter in SUMO2) cross-links involve residues Lys-100, Lys-108, and Lys-125. The residue at position 128 (Thr-128) is a Phosphothreonine. Position 137 is a phosphoserine (Ser-137). A Glycyl lysine isopeptide (Lys-Gly) (interchain with G-Cter in SUMO2) cross-link involves residue Lys-140. Thr-147 carries the post-translational modification Phosphothreonine. Glycyl lysine isopeptide (Lys-Gly) (interchain with G-Cter in SUMO2); alternate cross-links involve residues Lys-156 and Lys-161. Lys-156 and Lys-161 each carry N6-acetyllysine; alternate. Position 164 is a phosphothreonine (Thr-164). A Glycyl lysine isopeptide (Lys-Gly) (interchain with G-Cter in SUMO2) cross-link involves residue Lys-174. Phosphoserine occurs at positions 177 and 189. The tract at residues 181–341 (MQEVQSSRSG…SGGYGGRSRY (161 aa)) is disordered. The span at 190–211 (GRGGNFGFGDSRGGGGNFGPGP) shows a compositional bias: gly residues. Position 191 is an asymmetric dimethylarginine; alternate (Arg-191). Arg-191 is modified (dimethylated arginine; alternate). Omega-N-methylarginine; alternate is present on Arg-191. Phosphoserine is present on Ser-200. Arg-201 is subject to Asymmetric dimethylarginine; alternate. Dimethylated arginine; alternate is present on Arg-201. At Arg-201 the chain carries Omega-N-methylarginine; alternate. Ser-213 bears the Phosphoserine mark. Residue Arg-216 is modified to Omega-N-methylarginine. 2 positions are modified to phosphoserine: Ser-219 and Ser-224. Arg-226 carries the post-translational modification Omega-N-methylarginine. A Phosphoserine modification is found at Ser-247. At Arg-254 the chain carries Asymmetric dimethylarginine; alternate. Arg-254 bears the Omega-N-methylarginine; alternate mark. The nuclear targeting sequence stretch occupies residues 296-335 (QQPSNYGPMKSGNFGGSRNMGGPYGGGNYGPGGSGGSGGY). Positions 308–341 (NFGGSRNMGGPYGGGNYGPGGSGGSGGYGGRSRY) are enriched in gly residues. The residue at position 312 (Ser-312) is a Phosphoserine. Arg-313 carries the post-translational modification Omega-N-methylarginine. A Phosphotyrosine modification is found at Tyr-319. 2 positions are modified to phosphoserine: Ser-329 and Ser-332. Tyr-335 bears the Phosphotyrosine mark. Residue Arg-338 is modified to Omega-N-methylarginine.

In terms of assembly, identified in the spliceosome C complex. Identified in a IGF2BP1-dependent mRNP granule complex containing untranslated mRNAs. Interacts with IGF2BP1. Interacts with C9orf72. Interacts with DGCR8. Interacts with TARDBP. Interacts with CKAP5. Interacts with PPIA/CYPA. Interacts (via C-terminus) with FAM76B; the interaction results in retention of HNRNPA2B1 in the nucleus and inhibition of the NF-kappa-B-mediated inflammatory pathway. Interacts with NF-kappa-B inhibitors NFKBIA and NFKBIE; the interaction may be mediated by the RRM2 domain of HNRNPA2B1, and HNRNPA2B1 may interact simultaneously with FAM76B and either NFKBIA or NFKBIE to form a complex. In terms of processing, sumoylated in exosomes, promoting miRNAs-binding. Post-translationally, asymmetric dimethylation at Arg-254 constitutes the major methylation site. According to a report, methylation affects subcellular location and promotes nuclear localization. According to another report, methylation at Arg-254 does not influence nucleocytoplasmic shuttling.

Its subcellular location is the nucleus. The protein localises to the nucleoplasm. It localises to the cytoplasmic granule. The protein resides in the secreted. It is found in the extracellular exosome. In terms of biological role, heterogeneous nuclear ribonucleoprotein (hnRNP) that associates with nascent pre-mRNAs, packaging them into hnRNP particles. The hnRNP particle arrangement on nascent hnRNA is non-random and sequence-dependent and serves to condense and stabilize the transcripts and minimize tangling and knotting. Packaging plays a role in various processes such as transcription, pre-mRNA processing, RNA nuclear export, subcellular location, mRNA translation and stability of mature mRNAs. Forms hnRNP particles with at least 20 other different hnRNP and heterogeneous nuclear RNA in the nucleus. Involved in transport of specific mRNAs to the cytoplasm in oligodendrocytes and neurons: acts by specifically recognizing and binding the A2RE (21 nucleotide hnRNP A2 response element) or the A2RE11 (derivative 11 nucleotide oligonucleotide) sequence motifs present on some mRNAs, and promotes their transport to the cytoplasm. Specifically binds single-stranded telomeric DNA sequences, protecting telomeric DNA repeat against endonuclease digestion. Also binds other RNA molecules, such as primary miRNA (pri-miRNAs): acts as a nuclear 'reader' of the N6-methyladenosine (m6A) mark by specifically recognizing and binding a subset of nuclear m6A-containing pri-miRNAs. Binding to m6A-containing pri-miRNAs promotes pri-miRNA processing by enhancing binding of DGCR8 to pri-miRNA transcripts. Involved in miRNA sorting into exosomes following sumoylation, possibly by binding (m6A)-containing pre-miRNAs. Acts as a regulator of efficiency of mRNA splicing, possibly by binding to m6A-containing pre-mRNAs. Plays a role in the splicing of pyruvate kinase PKM by binding repressively to sequences flanking PKM exon 9, inhibiting exon 9 inclusion and resulting in exon 10 inclusion and production of the PKM M2 isoform. The chain is Heterogeneous nuclear ribonucleoproteins A2/B1 (HNRNPA2B1) from Saguinus oedipus (Cotton-top tamarin).